The primary structure comprises 104 residues: Phosphoribosyl-ATP pyrophosphatase (104 aa).

It belongs to the PRA-PH family.

Its subcellular location is the cytoplasm. The catalysed reaction is 1-(5-phospho-beta-D-ribosyl)-ATP + H2O = 1-(5-phospho-beta-D-ribosyl)-5'-AMP + diphosphate + H(+). Its pathway is amino-acid biosynthesis; L-histidine biosynthesis; L-histidine from 5-phospho-alpha-D-ribose 1-diphosphate: step 2/9. The protein is Phosphoribosyl-ATP pyrophosphatase of Erythrobacter litoralis (strain HTCC2594).